We begin with the raw amino-acid sequence, 337 residues long: Probable cytosolic iron-sulfur protein assembly protein Ciao1 (337 aa).

WD repeat units follow at residues 12-51 (GHRGRAWGAGWHPKGNVLATCGEDKTIRIWAEDASQRWVA), 58-97 (GHSRTIRDVAWSPCGQYLASASFDATVAIWDKKSGEFECN), 102-141 (GHENEVKSVSWSKSGSLLATCSRDKSVWVWEVAQEDEYEC), 147-186 (THTQDVKKVEWHPHEDILASASYDNTIKLYKEDLADSDWS), 193-232 (SHESTVWSISFDGSGNRLASCSDDQTVKIWQEYKPGNEFG), 251-290 (YHSRSVYDISWCKQSGLLATACGDDMVRIFKEVEGSSPHE), and 301-337 (AHSQDVNTVEWNPTVVGLLVTTSDDGDVKLWKYEPEE).

It belongs to the WD repeat CIA1 family.

Functionally, essential component of the cytosolic iron-sulfur (Fe/S) protein assembly machinery. Required for the maturation of extramitochondrial Fe/S proteins. The chain is Probable cytosolic iron-sulfur protein assembly protein Ciao1 from Aedes aegypti (Yellowfever mosquito).